We begin with the raw amino-acid sequence, 124 residues long: MNQRKLASNSPIDNCLILSGSVASTVKQSQNPLGVPNYRFWLEHRSIQTEVNLERQAWCKIQVILNGNQFSLITQQIKLGDKIRVYGFIHTHKDYNGLSQLVVHAEHIEFIDQEKPNGTLFPSS.

An SSB domain is found at 12–112 (IDNCLILSGS…VHAEHIEFID (101 aa)).

This sequence belongs to the PriB family. As to quaternary structure, homodimer. Interacts with PriA and DnaT. Component of the replication restart primosome. Primosome assembly occurs via a 'hand-off' mechanism. PriA binds to replication forks, subsequently PriB then DnaT bind; DnaT then displaces ssDNA to generate the helicase loading substrate.

Involved in the restart of stalled replication forks, which reloads the replicative helicase on sites other than the origin of replication; the PriA-PriB pathway is the major replication restart pathway. During primosome assembly it facilitates complex formation between PriA and DnaT on DNA; stabilizes PriA on DNA. Stimulates the DNA unwinding activity of PriA helicase. The polypeptide is Replication restart protein PriB (Actinobacillus pleuropneumoniae serotype 5b (strain L20)).